The primary structure comprises 130 residues: Small ribosomal subunit protein uS11c (130 aa).

Belongs to the universal ribosomal protein uS11 family. Part of the 30S ribosomal subunit.

It is found in the plastid. It localises to the chloroplast. The protein is Small ribosomal subunit protein uS11c of Chlorella vulgaris (Green alga).